We begin with the raw amino-acid sequence, 97 residues long: Large ribosomal subunit protein uL23 (97 aa).

Belongs to the universal ribosomal protein uL23 family. In terms of assembly, part of the 50S ribosomal subunit. Contacts protein L29, and trigger factor when it is bound to the ribosome.

Its function is as follows. One of the early assembly proteins it binds 23S rRNA. One of the proteins that surrounds the polypeptide exit tunnel on the outside of the ribosome. Forms the main docking site for trigger factor binding to the ribosome. This chain is Large ribosomal subunit protein uL23, found in Pelagibacter ubique (strain HTCC1062).